A 707-amino-acid chain; its full sequence is Polyribonucleotide nucleotidyltransferase (707 aa).

Mg(2+) is bound by residues Asp-485 and Asp-491. The KH domain occupies Pro-552–Ile-611. The 69-residue stretch at Gly-621 to Lys-689 folds into the S1 motif domain.

The protein belongs to the polyribonucleotide nucleotidyltransferase family. In terms of assembly, component of the RNA degradosome, which is a multiprotein complex involved in RNA processing and mRNA degradation. Mg(2+) is required as a cofactor.

Its subcellular location is the cytoplasm. It carries out the reaction RNA(n+1) + phosphate = RNA(n) + a ribonucleoside 5'-diphosphate. In terms of biological role, involved in mRNA degradation. Catalyzes the phosphorolysis of single-stranded polyribonucleotides processively in the 3'- to 5'-direction. The chain is Polyribonucleotide nucleotidyltransferase from Actinobacillus succinogenes (strain ATCC 55618 / DSM 22257 / CCUG 43843 / 130Z).